Consider the following 372-residue polypeptide: High-affinity lysophosphatidic acid receptor (372 aa).

Topologically, residues 1 to 38 are extracellular; sequence MGCNNTALDNCMLPNLSIATAPLDLRFAFSTPLRMLLA. Residues asparagine 4 and asparagine 15 are each glycosylated (N-linked (GlcNAc...) asparagine). The helical transmembrane segment at 39 to 59 threads the bilayer; that stretch reads IIMILMIAIAFLGNAIVCLIV. Topologically, residues 60-80 are cytoplasmic; it reads YQKPAMRSAINLLLATLAFSD. Residues 81 to 101 form a helical membrane-spanning segment; that stretch reads IMLSLFCMPFTAVTIITGSWL. Residues 102–108 lie on the Extracellular side of the membrane; that stretch reads FGTQFCQ. Residues 109–129 form a helical membrane-spanning segment; that stretch reads ISAMLYWFFVLEGVAILLIIS. Over 130–149 the chain is Cytoplasmic; that stretch reads VDRFLIIVQRQDKLNPHRAK. A helical transmembrane segment spans residues 150–170; that stretch reads IMIAASWVLSFCISLPSVVGW. Residues 171-198 are Extracellular-facing; it reads TLVEVPTRAPQCVLGYTEFSADRVYAVM. The helical transmembrane segment at 199 to 219 threads the bilayer; it reads LIVAVFFIPFSVMLYSYLCIL. Over 220–268 the chain is Cytoplasmic; sequence NTVRRNAVRIHTHADSLCLSQVSKLGLMGLQRPHQMNVDMSFKTRAFTT. A helical transmembrane segment spans residues 269–289; it reads ILILFIGFSLCWLPHSVFSLL. The Extracellular segment spans residues 290 to 301; that stretch reads SVFSRTFYYSSS. Residues 302–324 traverse the membrane as a helical segment; the sequence is FYSISTCTLWLTYLKSVFNPVIY. Residues 325 to 372 are Cytoplasmic-facing; sequence CWRIKKFREACLEFMPKTFKILPNVRGRTRRRIRPSTIYVCGEHQSAV.

It belongs to the G-protein coupled receptor 1 family. In terms of tissue distribution, ubiquitously expressed.

The protein localises to the cell membrane. Functionally, highly selective receptor for lysophosphatidic acid (LPA), a mediator of diverse cellular activities. The chain is High-affinity lysophosphatidic acid receptor from Xenopus laevis (African clawed frog).